Reading from the N-terminus, the 431-residue chain is Aspartokinase (431 aa).

Belongs to the aspartokinase family.

The catalysed reaction is L-aspartate + ATP = 4-phospho-L-aspartate + ADP. It participates in amino-acid biosynthesis; L-lysine biosynthesis via DAP pathway; (S)-tetrahydrodipicolinate from L-aspartate: step 1/4. The protein operates within amino-acid biosynthesis; L-methionine biosynthesis via de novo pathway; L-homoserine from L-aspartate: step 1/3. It functions in the pathway amino-acid biosynthesis; L-threonine biosynthesis; L-threonine from L-aspartate: step 1/5. This is Aspartokinase (lysC) from Chlamydia trachomatis serovar D (strain ATCC VR-885 / DSM 19411 / UW-3/Cx).